Reading from the N-terminus, the 619-residue chain is Phosphoenolpyruvate carboxykinase [GTP] (619 aa).

Residues Arg81 and 230–232 contribute to the substrate site; that span reads YGG. Residues Lys239 and His259 each contribute to the Mn(2+) site. Residue Ser281 coordinates substrate. Residue 282 to 287 coordinates GTP; that stretch reads ACGKTN. Residue Cys283 is part of the active site. Residue Asp306 coordinates Mn(2+). 399–401 is a substrate binding site; the sequence is NSR. GTP-binding positions include Arg401, Arg432, and 525–528; that span reads YGQN.

Belongs to the phosphoenolpyruvate carboxykinase [GTP] family. In terms of assembly, monomer. It depends on Mn(2+) as a cofactor.

It carries out the reaction oxaloacetate + GTP = phosphoenolpyruvate + GDP + CO2. Its function is as follows. In parasitic nematodes PEPCK carboxylates phosphoenolpyruvate to oxaloacetate thus introducing the products of glycolysis to mitochondrial metabolism. Catalyzes the conversion of oxaloacetate (OAA) to phosphoenolpyruvate (PEP), the rate-limiting step in the metabolic pathway that produces glucose from lactate and other precursors derived from the citric acid cycle. The sequence is that of Phosphoenolpyruvate carboxykinase [GTP] (PEPCK) from Haemonchus contortus (Barber pole worm).